Reading from the N-terminus, the 595-residue chain is Phosphomethylpyrimidine synthase (595 aa).

The segment covering 97-120 has biased composition (basic and acidic residues); it reads GRDVRPEDNGFTKDDDPRAAREVF. Residues 97-134 form a disordered region; the sequence is GRDVRPEDNGFTKDDDPRAAREVFPRTSSHKPLRAKKG. Basic residues predominate over residues 124-133; the sequence is SSHKPLRAKK. Residues Asn-202, Met-231, Tyr-260, His-296, 316-318, 357-360, and Glu-396 each bind substrate; these read SRG and DGLR. A Zn(2+)-binding site is contributed by His-400. Tyr-423 is a substrate binding site. Residue His-464 participates in Zn(2+) binding. [4Fe-4S] cluster contacts are provided by Cys-544, Cys-547, and Cys-552.

Belongs to the ThiC family. It depends on [4Fe-4S] cluster as a cofactor.

The catalysed reaction is 5-amino-1-(5-phospho-beta-D-ribosyl)imidazole + S-adenosyl-L-methionine = 4-amino-2-methyl-5-(phosphooxymethyl)pyrimidine + CO + 5'-deoxyadenosine + formate + L-methionine + 3 H(+). It participates in cofactor biosynthesis; thiamine diphosphate biosynthesis. In terms of biological role, catalyzes the synthesis of the hydroxymethylpyrimidine phosphate (HMP-P) moiety of thiamine from aminoimidazole ribotide (AIR) in a radical S-adenosyl-L-methionine (SAM)-dependent reaction. This is Phosphomethylpyrimidine synthase from Halalkalibacterium halodurans (strain ATCC BAA-125 / DSM 18197 / FERM 7344 / JCM 9153 / C-125) (Bacillus halodurans).